A 265-amino-acid polypeptide reads, in one-letter code: Novel plant SNARE 11 (265 aa).

Residues 1–215 (MDPISAVSEE…IGRQVATDKC (215 aa)) lie on the Cytoplasmic side of the membrane. The stretch at 30-75 (QKLEKIKDANRQSRQLEELTDKMRDCKSLIKDFDREIKSLESGNDA) forms a coiled coil. The t-SNARE coiled-coil homology domain maps to 144 to 206 (NSMMDDTDQA…KKASKLVKEI (63 aa)). A helical; Anchor for type IV membrane protein transmembrane segment spans residues 216–236 (IMAFLFLIVIGVIAIIIVKIV). The Vesicular portion of the chain corresponds to 237–265 (NPNNKDIRDIPGVGLAPPAMNRRLLWNHY).

This sequence belongs to the novel plant SNARE family. Interacts with KNOLLE to form a t-SNARE complex. Does not interact with SYP21, VTI12 or VPS45. In terms of tissue distribution, expressed in roots, stems, flower, siliques, expanding leaves, but not in mature leaves. Not limited to dividing cells.

It localises to the membrane. Functionally, t-SNARE involved in diverse vesicle trafficking and membrane fusion processes, including cell plate formation. In Arabidopsis thaliana (Mouse-ear cress), this protein is Novel plant SNARE 11 (NPSN11).